The sequence spans 473 residues: H(+)/Cl(-) exchange transporter ClcA (473 aa).

Residues 1 to 32 (MKTDTPSLETPQAARLRRRQLIRQLLERDKTP) lie on the Cytoplasmic side of the membrane. Residues 33–69 (LAILFMAAVVGTLVGLAAVAFDKGVAWLQNQRMGALV) traverse the membrane as a helical segment. The Periplasmic portion of the chain corresponds to 70–76 (HTADNYP). A helical membrane pass occupies residues 77–100 (LLLTVAFLCSAVLAMFGYFLVRKY). Residues 106-110 (GSGIP) carry the Selectivity filter part_1 motif. Chloride is bound at residue serine 107. The segment at residues 109–116 (IPEIEGAL) is an intramembrane region (helical). At 117–123 (EDQRPVR) the chain is on the cytoplasmic side. The next 2 helical transmembrane spans lie at 124–141 (WWRV…TLGG) and 148–166 (EGPT…LDVF). The Selectivity filter part_2 motif lies at 146-150 (GREGP). The Cytoplasmic segment spans residues 167 to 176 (RLKGDEARHT). Intramembrane regions (helical) lie at residues 177–189 (LLAT…LAAA) and 193–201 (PLAGILFII). The Cytoplasmic portion of the chain corresponds to 202–214 (EEMRPQFRYTLIS). The chain crosses the membrane as a helical span at residues 215–232 (IKAVFIGVIMSTIMYRIF). Residues 233-252 (NHEVALIDVGKLSDAPLNTL) are Periplasmic-facing. A helical membrane pass occupies residues 253–281 (WLYLILGIIFGIFGPIFNKWVLGMQDLLH). Over 282–287 (RVHGGN) the chain is Cytoplasmic. Residues 288 to 309 (ITKWVLMGGAIGGLCGLLGFVA) traverse the membrane as a helical segment. Over 310 to 329 (PATSGGGFNLIPIATAGNFS) the chain is Periplasmic. 2 consecutive transmembrane segments (helical) span residues 330 to 349 (MGML…LCFS) and 355 to 376 (GIFA…MVAV). The short motif at 355–359 (GIFAP) is the Selectivity filter part_3 element. Chloride contacts are provided by isoleucine 356 and phenylalanine 357. Over 377-386 (ELFPQYHLEA) the chain is Periplasmic. The helical intramembrane region spans 387–401 (GTFAIAGMGALLAAS). An intramembrane region (note=Loop between two helices) is located at residues 402 to 404 (IRA). Residues 405–416 (PLTGIILVLEMT) constitute an intramembrane region (helical). The segment at residues 417 to 421 (DNYQL) is an intramembrane region (note=Loop between two helices). Residues 422–438 (ILPMIITGLGATLLAQF) form a helical membrane-spanning segment. Residues 439-473 (TGGKPLYSAILARTLAKQEAEQLARSKAASASENT) are Cytoplasmic-facing. Tyrosine 445 contacts chloride.

Belongs to the chloride channel (TC 2.A.49) family. ClcA subfamily. Homodimer.

Its subcellular location is the cell inner membrane. It carries out the reaction 2 chloride(in) + H(+)(out) = 2 chloride(out) + H(+)(in). In terms of biological role, proton-coupled chloride transporter. Functions as antiport system and exchanges two chloride ions for 1 proton. Probably acts as an electrical shunt for an outwardly-directed proton pump that is linked to amino acid decarboxylation, as part of the extreme acid resistance (XAR) response. The sequence is that of H(+)/Cl(-) exchange transporter ClcA from Escherichia coli O157:H7.